The primary structure comprises 305 residues: HTH-type transcriptional regulator KdgR (305 aa).

Positions 55–116 constitute an HTH iclR-type domain; that stretch reads VSSVLKVFGI…GESEKYSLTL (62 aa). The H-T-H motif DNA-binding region spans 76–95; it reads ITELSQRVMMSKSTVYRFLQ. The 170-residue stretch at 131–300 folds into the IclR-ED domain; the sequence is LIRSADIQMR…ARNISDQMGY (170 aa).

In terms of assembly, homodimer.

It is found in the cytoplasm. Functionally, transcriptional repressor that negatively regulates the expression of genes involved in pectinolysis and in pectinase secretion. Controls genes involved in pectin catabolism, including the pectinase genes (pelA, pelB, pelC, pelE), genes involved in pectin catabolism (kdgT, ogl, kduI-kdgF) and the outT gene involved in pectinase secretion. Acts by binding directly to KdgR binding sites (KdgR-box) in the gene operator/promoter region. This chain is HTH-type transcriptional regulator KdgR, found in Dickeya chrysanthemi (Pectobacterium chrysanthemi).